Consider the following 404-residue polypeptide: Phosphopentomutase (404 aa).

Positions 10, 303, 308, 344, 345, and 356 each coordinate Mn(2+).

Belongs to the phosphopentomutase family. Mn(2+) is required as a cofactor.

It localises to the cytoplasm. The enzyme catalyses 2-deoxy-alpha-D-ribose 1-phosphate = 2-deoxy-D-ribose 5-phosphate. The catalysed reaction is alpha-D-ribose 1-phosphate = D-ribose 5-phosphate. The protein operates within carbohydrate degradation; 2-deoxy-D-ribose 1-phosphate degradation; D-glyceraldehyde 3-phosphate and acetaldehyde from 2-deoxy-alpha-D-ribose 1-phosphate: step 1/2. Its function is as follows. Isomerase that catalyzes the conversion of deoxy-ribose 1-phosphate (dRib-1-P) and ribose 1-phosphate (Rib-1-P) to deoxy-ribose 5-phosphate (dRib-5-P) and ribose 5-phosphate (Rib-5-P), respectively. In Shewanella sp. (strain MR-7), this protein is Phosphopentomutase.